We begin with the raw amino-acid sequence, 285 residues long: Protoheme IX farnesyltransferase (285 aa).

Helical transmembrane passes span 8–28, 36–56, 80–100, 107–127, 133–153, 163–183, 209–229, 232–252, and 265–285; these read ITKP…FLFA, YVLF…ACVF, LLPV…GLSI, FISM…YTMF, FYST…GYTA, ILLF…ISIM, IFFY…LGYL, NFLL…YSNI, and FYFS…DVFF.

Belongs to the UbiA prenyltransferase family. Protoheme IX farnesyltransferase subfamily.

It localises to the cell membrane. It catalyses the reaction heme b + (2E,6E)-farnesyl diphosphate + H2O = Fe(II)-heme o + diphosphate. Its pathway is porphyrin-containing compound metabolism; heme O biosynthesis; heme O from protoheme: step 1/1. Converts heme B (protoheme IX) to heme O by substitution of the vinyl group on carbon 2 of heme B porphyrin ring with a hydroxyethyl farnesyl side group. The chain is Protoheme IX farnesyltransferase from Buchnera aphidicola subsp. Acyrthosiphon pisum (strain Tuc7).